A 204-amino-acid chain; its full sequence is Large ribosomal subunit protein eL15 (204 aa).

Residues 155-204 form a disordered region; the sequence is VHKHREQRGLTSAGRKSRGLGKGWRFSATRGGSQAKNWKRKNTKVFHRKR. Basic residues predominate over residues 191-204; the sequence is NWKRKNTKVFHRKR.

Belongs to the eukaryotic ribosomal protein eL15 family.

The chain is Large ribosomal subunit protein eL15 (rpl-15) from Caenorhabditis elegans.